We begin with the raw amino-acid sequence, 149 residues long: MHCPFCSATDTKVIDSRLVADGHQVRRRRECVQCHERFTTFEGAELVMPRVVKQDGSRQPFDEEKLRGGMLRAVEKRPVSMDQIEQALTKIKSTLRATGEREVKSEMIGNLMMDHLVNLDKVAYIRFASVYRAFEDVSEFGDAIAKLQK.

A zinc finger lies at 3 to 34; the sequence is CPFCSATDTKVIDSRLVADGHQVRRRRECVQC. One can recognise an ATP-cone domain in the interval 49–139; sequence PRVVKQDGSR…VYRAFEDVSE (91 aa).

This sequence belongs to the NrdR family. It depends on Zn(2+) as a cofactor.

Functionally, negatively regulates transcription of bacterial ribonucleotide reductase nrd genes and operons by binding to NrdR-boxes. This Shewanella halifaxensis (strain HAW-EB4) protein is Transcriptional repressor NrdR.